A 123-amino-acid chain; its full sequence is UPF0102 protein Mflv_4140 (123 aa).

Belongs to the UPF0102 family.

The sequence is that of UPF0102 protein Mflv_4140 from Mycolicibacterium gilvum (strain PYR-GCK) (Mycobacterium gilvum (strain PYR-GCK)).